Reading from the N-terminus, the 263-residue chain is Norsolorinic acid ketoreductase stcE (263 aa).

NADP(+)-binding residues include Leu-29, Asp-76, Asn-105, Tyr-177, Lys-181, Ile-208, and Ser-210. Tyr-177 functions as the Proton donor in the catalytic mechanism. Residue Lys-181 is the Lowers pKa of active site Tyr of the active site.

Belongs to the short-chain dehydrogenases/reductases (SDR) family.

The catalysed reaction is (1'S)-averantin + NADP(+) = norsolorinic acid + NADPH + H(+). Its pathway is mycotoxin biosynthesis; sterigmatocystin biosynthesis. Short chain dehydrogenase; part of the gene cluster that mediates the biosynthesis of sterigmatocystin (ST), a polyketide-derived furanocoumarin which is part of the most toxic and carcinogenic compounds among the known mycotoxins. The first step in the biosynthesis of sterigmatocystin is the production of hexanoate by the fatty acid synthase (FAS) units stcJ and stcK. The polyketide backbone is assembled by the non-reducing polyketide synthase stcA by condensation of the starter hexanoyl-CoA and 7 malonyl-CoA extender units followed by cyclization and release of norsolorinic acid. Norsolorinic acid is the first stable intermediate in the biosynthesis of sterigmatocystin and is converted into averantin (AVN) by the ketoreductase stcE which reduces the hexanoate ketone to an alcohol. Averantin is then oxidized into 5'-hydroxyaverantin (HAVN) by the cytochrome P450 monooxygenase stcF. 5'-hydroxyaverantin is further converted to 5'-oxyaverantin (OAVN) by the 5'-hydroxyaverantin dehydrogenase stcG. The next step is the conversion of OAVN into averufin (AVF) which is catalyzed by a yet to be identified enzyme. The cytochrome P450 monooxygenase stcB and the flavin-binding monooxygenase stcW are both required for the conversion of averufin to 1-hydroxyversicolorone. The esterase stcI probably catalyzes the formation of versiconal hemiacetal acetate from 1-hydroxyversicolorone. The oxydoreductase stcN then probably catalyzes the biosynthetic step from versiconal to versicolorin B (VERB). The next step is performed by the versicolorin B desaturase stcL to produce versicolorin A (VERA). The ketoreductase stcU and the cytochrome P450 monooxygenase stcS are involved in the conversion of versicolorin A to demethylsterigmatocystin. The Baeyer-Villiger oxidas stcQ and the reductase stcR might be involved in the biosynthetic step from versicolorin A to demethylsterigmatocystin. The final step in the biosynthesis of sterigmatocystin is the methylation of demethylsterigmatocystin catalyzed by the methyltransferase stcP. The chain is Norsolorinic acid ketoreductase stcE from Emericella nidulans (strain FGSC A4 / ATCC 38163 / CBS 112.46 / NRRL 194 / M139) (Aspergillus nidulans).